The chain runs to 600 residues: Xylulose kinase (600 aa).

Residue W79–A82 coordinates substrate. S244 carries the phosphoserine modification. D299 is a binding site for substrate. Residues G358 and G505 to N509 contribute to the ATP site.

It belongs to the FGGY kinase family.

Its subcellular location is the cytoplasm. It catalyses the reaction D-xylulose + ATP = D-xylulose 5-phosphate + ADP + H(+). Xylulose kinase necessary for growth in culture media with D-xylulose as the solecarbon source. This chain is Xylulose kinase, found in Saccharomyces cerevisiae (strain ATCC 204508 / S288c) (Baker's yeast).